Here is a 201-residue protein sequence, read N- to C-terminus: UPF0301 protein Smed_0532 (201 aa).

The protein belongs to the UPF0301 (AlgH) family.

In Sinorhizobium medicae (strain WSM419) (Ensifer medicae), this protein is UPF0301 protein Smed_0532.